The chain runs to 475 residues: Phosphoethanolamine N-methyltransferase 1 (475 aa).

It belongs to the class I-like SAM-binding methyltransferase superfamily.

It carries out the reaction phosphoethanolamine + S-adenosyl-L-methionine = N-methylethanolamine phosphate + S-adenosyl-L-homocysteine + H(+). The protein operates within phospholipid metabolism; phosphatidylcholine biosynthesis; phosphocholine from phosphoethanolamine. Feedback inhibition by phosphatidylcholine. Functionally, catalyzes the first step in the synthesis of phosphocholine by converting phosphoethanolamine into phospho-monomethylethanolamine (N-methylethanolamine phosphate). Phosphocholine is a precursor for phosphatidylcholine, a major component in membranes and a precursor itself in the production of glycoconjugates secreted by parasitic nematodes to avoid host immune responses. This is Phosphoethanolamine N-methyltransferase 1 from Caenorhabditis elegans.